The chain runs to 426 residues: Enolase (426 aa).

Gln-165 serves as a coordination point for (2R)-2-phosphoglycerate. Catalysis depends on Glu-207, which acts as the Proton donor. 3 residues coordinate Mg(2+): Asp-244, Glu-285, and Asp-312. The (2R)-2-phosphoglycerate site is built by Lys-337, Arg-366, Ser-367, and Lys-388. Lys-337 acts as the Proton acceptor in catalysis.

This sequence belongs to the enolase family. Mg(2+) serves as cofactor.

The protein resides in the cytoplasm. It localises to the secreted. The protein localises to the cell surface. It carries out the reaction (2R)-2-phosphoglycerate = phosphoenolpyruvate + H2O. Its pathway is carbohydrate degradation; glycolysis; pyruvate from D-glyceraldehyde 3-phosphate: step 4/5. Catalyzes the reversible conversion of 2-phosphoglycerate (2-PG) into phosphoenolpyruvate (PEP). It is essential for the degradation of carbohydrates via glycolysis. The chain is Enolase from Thermosynechococcus vestitus (strain NIES-2133 / IAM M-273 / BP-1).